The following is a 151-amino-acid chain: Acidic phospholipase A2 2 (151 aa).

Residues 1-27 form the signal peptide; the sequence is MYPAHLLVLLAVCVSLLGAASIPARPL. 7 disulfide bridges follow: Cys-38–Cys-104, Cys-54–Cys-151, Cys-56–Cys-72, Cys-71–Cys-132, Cys-78–Cys-125, Cys-88–Cys-118, and Cys-111–Cys-123. Residues Tyr-55, Gly-57, and Gly-59 each coordinate Ca(2+). His-75 is a catalytic residue. Asp-76 serves as a coordination point for Ca(2+). Asp-126 is a catalytic residue.

The protein belongs to the phospholipase A2 family. Group I subfamily. D49 sub-subfamily. Requires Ca(2+) as cofactor. Expressed by the venom gland.

It localises to the secreted. It carries out the reaction a 1,2-diacyl-sn-glycero-3-phosphocholine + H2O = a 1-acyl-sn-glycero-3-phosphocholine + a fatty acid + H(+). In terms of biological role, PLA2 catalyzes the calcium-dependent hydrolysis of the 2-acyl groups in 3-sn-phosphoglycerides. This is Acidic phospholipase A2 2 from Tropidechis carinatus (Australian rough-scaled snake).